The chain runs to 173 residues: Translation initiation factor IF-3 (173 aa).

This sequence belongs to the IF-3 family. In terms of assembly, monomer.

The protein localises to the cytoplasm. In terms of biological role, IF-3 binds to the 30S ribosomal subunit and shifts the equilibrium between 70S ribosomes and their 50S and 30S subunits in favor of the free subunits, thus enhancing the availability of 30S subunits on which protein synthesis initiation begins. This chain is Translation initiation factor IF-3, found in Parvibaculum lavamentivorans (strain DS-1 / DSM 13023 / NCIMB 13966).